Reading from the N-terminus, the 537-residue chain is Myosin-binding protein H (537 aa).

Residues 1–25 show a composition bias toward low complexity; that stretch reads MTGKTAPAAAKKAPAAKKAPAPASK. Residues 1–138 are disordered; sequence MTGKTAPAAA…KPKEEPPSVP (138 aa). The segment covering 26-69 has biased composition (basic and acidic residues); that stretch reads KAPEPAPKEKPAPTPKEGHAPTPKEEHAPPPKEEHAPPPKEEHA. Residues 87 to 104 show a composition bias toward low complexity; the sequence is EQPAAPAAEHAPTPTHEA. The span at 112–124 shows a compositional bias: pro residues; it reads PPPAAPAEAPAPE. A Fibronectin type-III 1 domain is found at 137-232; sequence VPLSLAVEEV…LEQPVLIREI (96 aa). Residues 236 to 324 enclose the Ig-like C2-type 1 domain; that stretch reads PRIRLPRQLR…NGAEDKAILD (89 aa). Residues 333–428 enclose the Fibronectin type-III 2 domain; sequence PPQNLKLVDV…AAGVAHIKKT (96 aa). One can recognise an Ig-like C2-type 2 domain in the interval 444-528; it reads PKFTQPLTDR…VNPLGEASVD (85 aa).

Belongs to the immunoglobulin superfamily. MyBP family. As to expression, skeletal muscle. Seems to be also expressed in the slow tonic ald muscle. Not detected in gizzard or heart.

Functionally, binds to myosin; probably involved in interaction with thick myofilaments in the A-band. The chain is Myosin-binding protein H (MYBPH) from Gallus gallus (Chicken).